Reading from the N-terminus, the 309-residue chain is Olfactory receptor 5H17 (309 aa).

Topologically, residues 1 to 28 are extracellular; it reads MEKKNETLWTEFVLTGLTCLPQWKPLLF. A glycan (N-linked (GlcNAc...) asparagine) is linked at Asn5. The helical transmembrane segment at 29-49 threads the bilayer; that stretch reads LVFLVIYFMTIVGNLGLITLI. Residues 50–56 are Cytoplasmic-facing; sequence WNDPHLH. The helical transmembrane segment at 57-77 threads the bilayer; the sequence is IPMYLFLSNLAFVDTWLSSTV. Residues 78–93 are Extracellular-facing; that stretch reads TPRMLFNLLDKGKVIS. Residues 94–114 form a helical membrane-spanning segment; that stretch reads VAECKTQFFSFAISVTTECFL. Cys97 and Cys189 form a disulfide bridge. The Cytoplasmic segment spans residues 115 to 144; the sequence is LAAMAYDRYAAICNPLLYPVIMTNRLCVRL. Residues 145-165 traverse the membrane as a helical segment; sequence LALSFIGGFLHAVIHESFLSR. Topologically, residues 166–198 are extracellular; that stretch reads LTFCNSNIIYHFYCDVIPLLKISCTDPSLNYLI. A helical transmembrane segment spans residues 199–219; the sequence is IFIFSGSIQVFTIMTVLISYT. Over 220–239 the chain is Cytoplasmic; the sequence is FVLFTILKKKSDKGIRKAFS. Residues 240–260 traverse the membrane as a helical segment; it reads TCGAHLLSVSLYYGPLLFMYV. Residues 261 to 271 lie on the Extracellular side of the membrane; that stretch reads HPASSEVDDQD. A helical transmembrane segment spans residues 272–292; that stretch reads MILSLFYTVIIPVLNPIIYSL. The Cytoplasmic segment spans residues 293 to 309; it reads RNKQVIDSLKKMLKMMV.

The protein belongs to the G-protein coupled receptor 1 family.

It is found in the cell membrane. Potential odorant receptor. This Mus musculus (Mouse) protein is Olfactory receptor 5H17.